We begin with the raw amino-acid sequence, 2096 residues long: HEAT repeat-containing protein 1 homolog (2096 aa).

The HEAT repeat unit spans residues 2058–2096 (TVPFIAELLEDEHQRVEKNTRTGVQELETILGESVQKYL).

Belongs to the HEATR1/UTP10 family. In terms of assembly, part of the small subunit (SSU) processome, composed of more than 70 proteins and the RNA chaperone small nucleolar RNA (snoRNA) U3. Interacts with MYC; the interaction is required for localization of MYC to the nucleolus.

The protein resides in the nucleus. The protein localises to the nucleolus. In terms of biological role, ribosome biogenesis factor; required for recruitment of Myc to nucleoli. Involved in nucleolar processing of pre-18S ribosomal RNA. Required for optimal pre-ribosomal RNA transcription by RNA polymerase I. Part of the small subunit (SSU) processome, first precursor of the small eukaryotic ribosomal subunit. During the assembly of the SSU processome in the nucleolus, many ribosome biogenesis factors, an RNA chaperone and ribosomal proteins associate with the nascent pre-rRNA and work in concert to generate RNA folding, modifications, rearrangements and cleavage as well as targeted degradation of pre-ribosomal RNA by the RNA exosome. Involved in neuronal-lineage cell proliferation during larval development. The polypeptide is HEAT repeat-containing protein 1 homolog (Drosophila melanogaster (Fruit fly)).